We begin with the raw amino-acid sequence, 94 residues long: Surfactant-associated protein 3 (94 aa).

As to expression, found in lung alveolar cells type I and II, as well as alveolar macrophages (at protein level). Detected also in testis and kidney. Expressed by different tissues of the ocular system like cornea, conjuctiva, lacrimal gland, eyelid and efferent tear ducts (at protein level). From these tissues is secreted into the tear film (at protein level).

The protein localises to the cytoplasm. It localises to the secreted. Putative surfactant protein. May be involved in wound healing and in the reduction of the surface tension at the ocular surface. The polypeptide is Surfactant-associated protein 3 (SFTA3) (Homo sapiens (Human)).